Here is a 462-residue protein sequence, read N- to C-terminus: ATP synthase subunit beta (462 aa).

Position 152-159 (152-159 (GGAGVGKT)) interacts with ATP.

It belongs to the ATPase alpha/beta chains family. As to quaternary structure, F-type ATPases have 2 components, CF(1) - the catalytic core - and CF(0) - the membrane proton channel. CF(1) has five subunits: alpha(3), beta(3), gamma(1), delta(1), epsilon(1). CF(0) has three main subunits: a(1), b(2) and c(9-12). The alpha and beta chains form an alternating ring which encloses part of the gamma chain. CF(1) is attached to CF(0) by a central stalk formed by the gamma and epsilon chains, while a peripheral stalk is formed by the delta and b chains.

It localises to the cell inner membrane. It carries out the reaction ATP + H2O + 4 H(+)(in) = ADP + phosphate + 5 H(+)(out). Functionally, produces ATP from ADP in the presence of a proton gradient across the membrane. The catalytic sites are hosted primarily by the beta subunits. This Tolumonas auensis (strain DSM 9187 / NBRC 110442 / TA 4) protein is ATP synthase subunit beta.